Consider the following 1364-residue polypeptide: Pleckstrin homology domain-containing family H member 1 (1364 aa).

A coiled-coil region spans residues 28–169 (FRLQASKIRE…VGSLQDALEA (142 aa)). Disordered stretches follow at residues 184-266 (GAAE…SPPH), 296-321 (GTKTSAREGGPGSSLTLPKVRAPGTP), 356-395 (LHPSGLPELESRARSREEPEKMEMEEPPPAGKNEERESPK), 487-529 (PFMD…IKRG), and 546-568 (DACSLDSDYSEPEHKLQRTSSYS). Polar residues predominate over residues 237-246 (EDSSSSTVHS). Residues 364-379 (LESRARSREEPEKMEM) are compositionally biased toward basic and acidic residues. Over residues 509-520 (VPSSESRKTSGL) the composition is skewed to polar residues. 2 PH domains span residues 578–672 (SLEK…SLLK) and 687–796 (KPTV…VAAG). A Phosphoserine modification is found at serine 745. Residues 832–986 (YSKDGLYASL…PSRMEVVSIL (155 aa)) form the MyTH4 domain. In terms of domain architecture, FERM spans 997–1333 (FSIPVHFTNG…NHCTTTVNPP (337 aa)).

The sequence is that of Pleckstrin homology domain-containing family H member 1 (PLEKHH1) from Homo sapiens (Human).